The primary structure comprises 673 residues: Clotting factor G alpha subunit (673 aa).

A signal peptide spans 1–19; it reads MLVLLCCVVLHVGVARICC. The region spanning 27–257 is the GH16 domain; it reads LVWSDEFTNG…YVRVYQDAST (231 aa). The Nucleophile role is filled by glutamate 137. Glutamate 142 (proton donor) is an active-site residue. Asparagine 186 is a glycosylation site (N-linked (GlcNAc...) asparagine). Residues 266-404 enclose the Ricin B-type lectin domain; that stretch reads LDGYYFVQNR…NQLSGQWKLI (139 aa). CBM6 domains follow at residues 411–533 and 549–671; these read KLIQ…IKIT and KLIQ…IRIT.

Belongs to the glycosyl hydrolase 16 family. As to quaternary structure, clotting factor G is a heterodimer composed of two non-covalently associated subunits, alpha and beta. In presence of (1-&gt;3)-beta-glucan, proteolytically cleaved into a 55kDa and a 17kDa forms. Expressed in hemocytes (at protein level).

Its function is as follows. Component of the heterodimer clotting factor G which may play a role in defense mechanisms against fungi. Initiates a (1-&gt;3)-beta-glucan-sensing clotting pathway whereby the alpha subunit binds to glucans containing (1-&gt;3)-beta linkages, which are components of the fungal cell wall, and the beta subunit catalyzes the activation of proclotting enzyme. The sequence is that of Clotting factor G alpha subunit from Tachypleus tridentatus (Japanese horseshoe crab).